The primary structure comprises 139 residues: Putative flagella-related protein F (139 aa).

The signal sequence occupies residues 1 to 18 (MGFSSVVGATVMIIALLV). C19 bears the N-acetylcysteine mark. C19 is lipidated: S-archaeol cysteine.

This sequence to M.voltae FlaF.

It localises to the archaeal flagellum. Its subcellular location is the membrane. In Methanocaldococcus jannaschii (strain ATCC 43067 / DSM 2661 / JAL-1 / JCM 10045 / NBRC 100440) (Methanococcus jannaschii), this protein is Putative flagella-related protein F (flaF).